The following is a 49-amino-acid chain: Disintegrin echistatin-gamma (49 aa).

The region spanning 1 to 47 (DCASGPCCRDCKFLEEGTICNMARGDDMDDYCNGKTCDCPRNPHKWP) is the Disintegrin domain. Cystine bridges form between Cys2–Cys11, Cys7–Cys32, Cys8–Cys37, and Cys20–Cys39. The Cell attachment site signature appears at 24-26 (RGD).

The protein belongs to the venom metalloproteinase (M12B) family. P-II subfamily. P-IIa sub-subfamily. As to quaternary structure, monomer. As to expression, expressed by the venom gland.

It is found in the secreted. In terms of biological role, has antiplatelet activities on guinea pig, followed by human, rabbit and rat platelet-rich plasma. The protein is Disintegrin echistatin-gamma of Echis pyramidum leakeyi (Leakey's carpet viper).